Here is a 575-residue protein sequence, read N- to C-terminus: Inactive terpenoid synthase 20, chloroplastic (575 aa).

The N-terminal 52 residues, 1 to 52, are a transit peptide targeting the chloroplast; the sequence is MEAITKNGSLSQTLVHCGPKSLSSFIPVRCLRFSKNPFPKKLVVTRARTSIN. Mg(2+) contacts are provided by Asp-332, Asp-336, Asp-474, Thr-478, and Glu-482. A DDXXD motif motif is present at residues 332–336; that stretch reads DDLYD.

This sequence belongs to the terpene synthase family. Tpsa subfamily. As to expression, predominantly expressed in roots but also in leaves and stems.

Its subcellular location is the plastid. The protein localises to the chloroplast. Functionally, does not possess diterpene synthase activity. The polypeptide is Inactive terpenoid synthase 20, chloroplastic (Arabidopsis thaliana (Mouse-ear cress)).